Reading from the N-terminus, the 447-residue chain is Coagulation factor VII (447 aa).

An N-terminal signal peptide occupies residues 1-23 (MLSQAWALALLCFLLSLWGSLPA). Residues 24 to 40 (VFLPQEQALSILHRPRR) constitute a propeptide that is removed on maturation. The Gla domain maps to 41 to 85 (ANGFLEELLPGSLERECREELCSFEEAHEIFRNEERTRQFWVSYN). A 4-carboxyglutamate mark is found at Glu-46, Glu-47, Glu-54, Glu-56, Glu-59, Glu-60, Glu-65, Glu-66, Glu-69, Glu-74, and Glu-75. A disulfide bond links Cys-57 and Cys-62. The EGF-like 1; calcium-binding domain occupies 86 to 122 (DGDQCASSPCQNGGSCEDQLRSYICFCPDGFEGRNCE). Disulfide bonds link Cys-90–Cys-101, Cys-95–Cys-110, Cys-112–Cys-121, Cys-131–Cys-142, Cys-138–Cys-152, Cys-154–Cys-167, Cys-175–Cys-302, Cys-199–Cys-204, Cys-218–Cys-234, and Cys-350–Cys-369. Ser-92 carries an O-linked (Glc...) serine glycan. The O-linked (Glc...) serine; alternate glycan is linked to Ser-92. O-linked (Xyl...) serine; alternate glycosylation occurs at Ser-92. A glycan (O-linked (Fuc) serine) is linked at Ser-100. The EGF-like 2 domain occupies 127–168 (SQLICANDNGGCEQYCGADPGAGRFCWCHEGYALQADGVSCA). A glycan (N-linked (GlcNAc...) asparagine) is linked at Asn-185. One can recognise a Peptidase S1 domain in the interval 193–432 (IVGGHVCPKG…YTAWLRQLMG (240 aa)). The active-site Charge relay system is the His-233. Residue Asn-243 is glycosylated (N-linked (GlcNAc...) asparagine). Asp-282 functions as the Charge relay system in the catalytic mechanism. Asp-378 serves as a coordination point for substrate. An intrachain disulfide couples Cys-380 to Cys-408. Ser-384 serves as the catalytic Charge relay system.

Belongs to the peptidase S1 family. In terms of assembly, heterodimer of a light chain and a heavy chain linked by a disulfide bond. In terms of processing, the vitamin K-dependent, enzymatic carboxylation of some glutamate residues allows the modified protein to bind calcium. Post-translationally, O-glycosylated. O-fucosylated by POFUT1 on a conserved serine or threonine residue found in the consensus sequence C2-X(4,5)-[S/T]-C3 of EGF domains, where C2 and C3 are the second and third conserved cysteines. Can be either O-glucosylated or O-xylosylated at Ser-92 by POGLUT1. As to expression, plasma.

It localises to the secreted. The catalysed reaction is Selective cleavage of Arg-|-Ile bond in factor X to form factor Xa.. In terms of biological role, initiates the extrinsic pathway of blood coagulation. Serine protease that circulates in the blood in a zymogen form. Factor VII is converted to factor VIIa by factor Xa, factor XIIa, factor IXa, or thrombin by minor proteolysis. In the presence of tissue factor and calcium ions, factor VIIa then converts factor X to factor Xa by limited proteolysis. Factor VIIa also converts factor IX to factor IXa in the presence of tissue factor and calcium. This chain is Coagulation factor VII (F7), found in Bos taurus (Bovine).